We begin with the raw amino-acid sequence, 344 residues long: Trace amine-associated receptor 8a (344 aa).

The Extracellular portion of the chain corresponds to 1-33; the sequence is MTSNFSQAPLQLCYENVNASCIKTPYSPGLRVL. 2 N-linked (GlcNAc...) asparagine glycosylation sites follow: Asn-4 and Asn-18. Cystine bridges form between Cys-21–Cys-185 and Cys-96–Cys-189. The helical transmembrane segment at 34–54 threads the bilayer; sequence LYMVFGFGAVLAVCGNLLVVI. Residues 55 to 67 are Cytoplasmic-facing; the sequence is SVLHFKQLHSPAN. The helical transmembrane segment at 68-88 threads the bilayer; it reads FLIASLASADFLVGISVMPFS. Residues 89-102 lie on the Extracellular side of the membrane; that stretch reads MVRSIESCWYFGDT. Residues 103–127 traverse the membrane as a helical segment; it reads FCSLHSCCDAAFCYSSLFHLCFISV. Residues 128–146 are Cytoplasmic-facing; that stretch reads DRYIAVTDPLVYPTKFTVS. Residues 147-167 form a helical membrane-spanning segment; it reads VSGICISISWILPLVYSSAVF. At 168–196 the chain is on the extracellular side; it reads YTGISATGIENLVSALNCVGGCQIVVNQD. A helical transmembrane segment spans residues 197–217; that stretch reads WVLIDFLLFLIPTLVMIILYS. Topologically, residues 218 to 260 are cytoplasmic; the sequence is KIFLVAKQQAVKIETSISGSKGESSLESHKARVAKRERKAAKT. The chain crosses the membrane as a helical span at residues 261 to 281; that stretch reads LGVTVVAFMVSWLPYTIDTLI. At 282 to 291 the chain is on the extracellular side; sequence DAFMGFITPA. A helical membrane pass occupies residues 292–314; sequence YVYEICCWSAYYNSAMNPLIYAF. Residues 315–344 are Cytoplasmic-facing; sequence FYPWFRKAIKLILSGEILKSHSSTMSLFSE.

The protein belongs to the G-protein coupled receptor 1 family.

It localises to the cell membrane. In terms of biological role, olfactory receptor activated by trace amines. Trace amine compounds are enriched in animal body fluids and act on trace amine-associated receptors (TAARs) to elicit both intraspecific and interspecific innate behaviors. Ligand-binding causes a conformation change that triggers signaling via G(s)-class of G alpha proteins (GNAL or GNAS). This chain is Trace amine-associated receptor 8a, found in Rattus norvegicus (Rat).